The sequence spans 253 residues: Glucosamine-6-phosphate deaminase (253 aa).

The active-site Proton acceptor; for enolization step is Asp-67. The active-site For ring-opening step is the Asn-136. The active-site Proton acceptor; for ring-opening step is the His-138. The active-site For ring-opening step is Glu-143.

It belongs to the glucosamine/galactosamine-6-phosphate isomerase family. NagB subfamily.

It carries out the reaction alpha-D-glucosamine 6-phosphate + H2O = beta-D-fructose 6-phosphate + NH4(+). The protein operates within amino-sugar metabolism; N-acetylneuraminate degradation; D-fructose 6-phosphate from N-acetylneuraminate: step 5/5. Catalyzes the reversible isomerization-deamination of glucosamine 6-phosphate (GlcN6P) to form fructose 6-phosphate (Fru6P) and ammonium ion. In Thermoanaerobacter sp. (strain X514), this protein is Glucosamine-6-phosphate deaminase.